The primary structure comprises 378 residues: MNIWLSMLTTTGLGAIIGGFTNHLAIKMLFRPHRPIYIGKFQVPFTPGLIPKRRDELAVQLGKMVVEHLLTPEGIGKKLTNEEFQKGLIHWAQVEVDKVITNEQSLRHMLEKWDVAHVEKEATEKIEQVITEKIQAFLEEYYTYTWEQALPHSVHEKIENAIPNVSAFILGRATQFFESEEGKARLSKMIDDFFASRGTLLNLVGMFLGNVSVVDRVQPEVIKFLGQDGTKQLLTEVLQKELEKLKGRDVKEVETFVEKEMIVSSILSAVKVEETVSKFLNQSVQQVCEPVRETIMEKVVPGVVTKGLKWGAENVASILNNLHLAEIVQQEVSTFSTERLEDLVLSITKNELKMITYLGALLGGMIGIVQGLLLLFLK.

Helical transmembrane passes span 1-21 (MNIWLSMLTTTGLGAIIGGFT) and 357-377 (YLGALLGGMIGIVQGLLLLFL).

This sequence belongs to the UPF0754 family.

The protein resides in the cell membrane. In Bacillus cereus (strain AH187), this protein is UPF0754 membrane protein BCAH187_A1042.